Reading from the N-terminus, the 348-residue chain is Probable tRNA pseudouridine synthase B (348 aa).

Residue Asp93 is the Nucleophile of the active site. The region spanning 260–335 is the PUA domain; sequence LKKIYILDSA…IAVDIERVFM (76 aa).

Belongs to the pseudouridine synthase TruB family. Type 2 subfamily.

It carries out the reaction uridine(55) in tRNA = pseudouridine(55) in tRNA. In terms of biological role, could be responsible for synthesis of pseudouridine from uracil-55 in the psi GC loop of transfer RNAs. The protein is Probable tRNA pseudouridine synthase B of Nanoarchaeum equitans (strain Kin4-M).